Reading from the N-terminus, the 475-residue chain is Ribulose bisphosphate carboxylase large chain (475 aa).

A propeptide spanning residues 1 to 2 is cleaved from the precursor; that stretch reads MS. N-acetylproline is present on P3. Position 14 is an N6,N6,N6-trimethyllysine (K14). 2 residues coordinate substrate: N123 and T173. The Proton acceptor role is filled by K175. K177 serves as a coordination point for substrate. Mg(2+)-binding residues include K201, D203, and E204. The residue at position 201 (K201) is an N6-carboxylysine. H294 (proton acceptor) is an active-site residue. Positions 295, 327, and 379 each coordinate substrate.

It belongs to the RuBisCO large chain family. Type I subfamily. Heterohexadecamer of 8 large chains and 8 small chains; disulfide-linked. The disulfide link is formed within the large subunit homodimers. The cofactor is Mg(2+). The disulfide bond which can form in the large chain dimeric partners within the hexadecamer appears to be associated with oxidative stress and protein turnover.

The protein resides in the plastid. The protein localises to the chloroplast. The catalysed reaction is 2 (2R)-3-phosphoglycerate + 2 H(+) = D-ribulose 1,5-bisphosphate + CO2 + H2O. It catalyses the reaction D-ribulose 1,5-bisphosphate + O2 = 2-phosphoglycolate + (2R)-3-phosphoglycerate + 2 H(+). In terms of biological role, ruBisCO catalyzes two reactions: the carboxylation of D-ribulose 1,5-bisphosphate, the primary event in carbon dioxide fixation, as well as the oxidative fragmentation of the pentose substrate in the photorespiration process. Both reactions occur simultaneously and in competition at the same active site. The protein is Ribulose bisphosphate carboxylase large chain of Buxus microphylla (Littleleaf boxwood).